Consider the following 384-residue polypeptide: Probable zinc-binding alcohol dehydrogenase Rv1895 (384 aa).

Zn(2+)-binding residues include Cys-38, His-59, Cys-89, Cys-92, Cys-95, and Cys-103.

It belongs to the zinc-containing alcohol dehydrogenase family. Zn(2+) serves as cofactor.

It carries out the reaction a primary alcohol + NAD(+) = an aldehyde + NADH + H(+). It catalyses the reaction a secondary alcohol + NAD(+) = a ketone + NADH + H(+). The chain is Probable zinc-binding alcohol dehydrogenase Rv1895 from Mycobacterium tuberculosis (strain ATCC 25618 / H37Rv).